We begin with the raw amino-acid sequence, 134 residues long: uncharacterized protein (134 aa).

The protein belongs to the ycf68 family.

The protein resides in the plastid. The protein localises to the chloroplast. This is an uncharacterized protein from Saccharum hybrid (Sugarcane).